The primary structure comprises 679 residues: DNA ligase (679 aa).

Residues 41-45 (DSVYD), 90-91 (SL), and Glu-120 each bind NAD(+). Catalysis depends on Lys-122, which acts as the N6-AMP-lysine intermediate. Residues Arg-143, Glu-177, Lys-293, and Lys-317 each contribute to the NAD(+) site. 4 residues coordinate Zn(2+): Cys-411, Cys-414, Cys-429, and Cys-434. Residues 597-679 (DSNSWFAGKR…SETMREDAQA (83 aa)) form the BRCT domain.

This sequence belongs to the NAD-dependent DNA ligase family. LigA subfamily. Requires Mg(2+) as cofactor. Mn(2+) serves as cofactor.

It catalyses the reaction NAD(+) + (deoxyribonucleotide)n-3'-hydroxyl + 5'-phospho-(deoxyribonucleotide)m = (deoxyribonucleotide)n+m + AMP + beta-nicotinamide D-nucleotide.. Functionally, DNA ligase that catalyzes the formation of phosphodiester linkages between 5'-phosphoryl and 3'-hydroxyl groups in double-stranded DNA using NAD as a coenzyme and as the energy source for the reaction. It is essential for DNA replication and repair of damaged DNA. The sequence is that of DNA ligase from Lactiplantibacillus plantarum (strain ATCC BAA-793 / NCIMB 8826 / WCFS1) (Lactobacillus plantarum).